Consider the following 558-residue polypeptide: Formate--tetrahydrofolate ligase (558 aa).

An ATP-binding site is contributed by 66–73; that stretch reads TPAGEGKT.

Belongs to the formate--tetrahydrofolate ligase family.

It carries out the reaction (6S)-5,6,7,8-tetrahydrofolate + formate + ATP = (6R)-10-formyltetrahydrofolate + ADP + phosphate. It functions in the pathway one-carbon metabolism; tetrahydrofolate interconversion. The protein is Formate--tetrahydrofolate ligase of Neisseria meningitidis serogroup B (strain ATCC BAA-335 / MC58).